The primary structure comprises 969 residues: Chromosome transmission fidelity protein 18 homolog (969 aa).

The interval 30–97 is disordered; the sequence is EGTRDQAPPG…APSSPMVKRP (68 aa). Position 51 is a phosphothreonine (Thr51). Ser221 bears the Phosphoserine mark. 2 disordered regions span residues 250–269 and 318–340; these read SEGE…APGQ and RKPR…GKWK. A compositionally biased stretch (low complexity) spans 257 to 268; that stretch reads LEGPPAEEPAPG. 369-376 provides a ligand contact to ATP; it reads GPPGLGKT. Residues 856–889 are disordered; sequence ARSGPQVDQGSSGPASLWTDSGEKGTRQPAPRNH. A compositionally biased stretch (basic and acidic residues) spans 876–889; sequence SGEKGTRQPAPRNH.

This sequence belongs to the activator 1 small subunits family. CTF18 subfamily. Component of the CTF18-RFC complex, which consists of CTF18, CTF8, DCC1, RFC2, RFC3, RFC4 and RFC5. During assembly of the CTF18-RFC complex, CTF18 may first assemble into a subcomplex with RFC2, RFC3, RFC4 and RFC5. CTF18 then interacts directly with CTF8, which in turn interacts with DCC1. The CTF18-RFC complex associates with PCNA and with DNA polymerase POLH. The CTF18-RFC complex does not interact with the Rad9/Rad1/Hus1 complex. CTF18 interacts with SMC1A and RAD21. Interacts with DDX11.

Its subcellular location is the nucleus. Chromosome cohesion factor involved in sister chromatid cohesion and fidelity of chromosome transmission. Component of one of the cell nuclear antigen loader complexes, CTF18-replication factor C (CTF18-RFC), which consists of CTF18, CTF8, DCC1, RFC2, RFC3, RFC4 and RFC5. The CTF18-RFC complex binds to single-stranded and primed DNAs and has weak ATPase activity that is stimulated by the presence of primed DNA, replication protein A (RPA) and by proliferating cell nuclear antigen (PCNA). The CTF18-RFC complex catalyzes the ATP-dependent loading of PCNA onto primed and gapped DNA. Interacts with and stimulates DNA polymerase POLH. During DNA repair synthesis, involved in loading DNA polymerase POLE at the sites of local damage. This Mus musculus (Mouse) protein is Chromosome transmission fidelity protein 18 homolog (Chtf18).